The sequence spans 332 residues: Biotin synthase (332 aa).

One can recognise a Radical SAM core domain in the interval 53–282 (HFGKKVKLNM…TKEIRISGGR (230 aa)). The [4Fe-4S] cluster site is built by Cys-71, Cys-75, and Cys-78. [2Fe-2S] cluster-binding residues include Cys-115, Cys-147, Cys-207, and Arg-277.

This sequence belongs to the radical SAM superfamily. Biotin synthase family. As to quaternary structure, homodimer. The cofactor is [4Fe-4S] cluster. [2Fe-2S] cluster is required as a cofactor.

It catalyses the reaction (4R,5S)-dethiobiotin + (sulfur carrier)-SH + 2 reduced [2Fe-2S]-[ferredoxin] + 2 S-adenosyl-L-methionine = (sulfur carrier)-H + biotin + 2 5'-deoxyadenosine + 2 L-methionine + 2 oxidized [2Fe-2S]-[ferredoxin]. It participates in cofactor biosynthesis; biotin biosynthesis; biotin from 7,8-diaminononanoate: step 2/2. Its function is as follows. Catalyzes the conversion of dethiobiotin (DTB) to biotin by the insertion of a sulfur atom into dethiobiotin via a radical-based mechanism. The polypeptide is Biotin synthase (Bacillus cereus (strain AH187)).